We begin with the raw amino-acid sequence, 425 residues long: Probable mannosyltransferase KTR2 (425 aa).

Over 1 to 13 the chain is Cytoplasmic; it reads MQICKVFLTQVKK. A helical; Signal-anchor for type II membrane protein transmembrane segment spans residues 14–33; sequence LLFVSLLFCLIAQTCWLALV. The stem region stretch occupies residues 34–89; it reads PYQRQLSLDSYFFRRSREVSSRYDFTRRRHMNQTLKLSSNTYNDEPLNKTKGIKNQ. Residues 34-425 lie on the Lumenal side of the membrane; the sequence is PYQRQLSLDS…SGKYFLKHDS (392 aa). Asn65, Asn81, Asn92, and Asn167 each carry an N-linked (GlcNAc...) asparagine glycan. Positions 90 to 425 are catalytic; sequence RENATLLMLV…SGKYFLKHDS (336 aa). Residue Glu313 is the Nucleophile of the active site.

The protein belongs to the glycosyltransferase 15 family.

It is found in the golgi apparatus membrane. It participates in protein modification; protein glycosylation. Involved in N-linked glycosylation. Transfers an alpha-D-mannosyl residue from GDP-mannose into lipid-linked oligosaccharide, forming an alpha-(1-&gt;2)-D-mannosyl-D-mannose linkage. The chain is Probable mannosyltransferase KTR2 (KTR2) from Saccharomyces cerevisiae (strain ATCC 204508 / S288c) (Baker's yeast).